Reading from the N-terminus, the 1181-residue chain is Putative type II restriction enzyme and methyltransferase RM.MjaORFECS2P (1181 aa).

The protein in the C-terminal section; belongs to the N(4)/N(6)-methyltransferase family.

The enzyme catalyses Endonucleolytic cleavage of DNA to give specific double-stranded fragments with terminal 5'-phosphates.. The catalysed reaction is a 2'-deoxyadenosine in DNA + S-adenosyl-L-methionine = an N(6)-methyl-2'-deoxyadenosine in DNA + S-adenosyl-L-homocysteine + H(+). In terms of biological role, probably a G subtype restriction enzyme that recognizes an undetermined sequence and cleaves at an undetermined site. Probably also acts as an alpha subtype methylase, presumably on the same sequence. In Methanocaldococcus jannaschii (strain ATCC 43067 / DSM 2661 / JAL-1 / JCM 10045 / NBRC 100440) (Methanococcus jannaschii), this protein is Putative type II restriction enzyme and methyltransferase RM.MjaORFECS2P.